Reading from the N-terminus, the 153-residue chain is Endoribonuclease YbeY (153 aa).

Residues histidine 116, histidine 120, and histidine 126 each coordinate Zn(2+).

Belongs to the endoribonuclease YbeY family. Zn(2+) serves as cofactor.

The protein localises to the cytoplasm. Its function is as follows. Single strand-specific metallo-endoribonuclease involved in late-stage 70S ribosome quality control and in maturation of the 3' terminus of the 16S rRNA. This Paraburkholderia phymatum (strain DSM 17167 / CIP 108236 / LMG 21445 / STM815) (Burkholderia phymatum) protein is Endoribonuclease YbeY.